A 540-amino-acid polypeptide reads, in one-letter code: Pentatricopeptide repeat-containing protein At1g80880, mitochondrial (540 aa).

Residues 1–87 (MAAIVAIGRK…ETFDINLTAL (87 aa)) constitute a mitochondrion transit peptide. 10 PPR repeats span residues 154-184 (DQKS…MFNV), 188-222 (TRKA…KHTP), 223-253 (YDEA…SKKL), 257-292 (DVEG…CITP), 293-327 (NKDS…GLAP), 328-362 (GIEV…GLKP), 363-397 (DSVT…NLSP), 402-428 (FHAF…DLGP), 429-463 (TEET…EIVA), and 464-498 (NPAL…GFVG). The interval 514-540 (VRKSKRMNLQKVGSQEGYKGQRSVDRK) is disordered.

Belongs to the PPR family. P subfamily.

The protein localises to the mitochondrion. The chain is Pentatricopeptide repeat-containing protein At1g80880, mitochondrial from Arabidopsis thaliana (Mouse-ear cress).